An 88-amino-acid chain; its full sequence is Arminin 1b (88 aa).

Residues 1–18 form the signal peptide; that stretch reads MKTVLAFLFLTFIAFTHA. A propeptide spanning residues 19–57 is cleaved from the precursor; the sequence is ESYEDVKEEIKNEVEREIFEDLEEESDVLESNVRELNDA. Residue valine 85 is modified to Valine amide.

Belongs to the arminin family. In terms of tissue distribution, expressed in entodermal epithelium along the body column.

Its subcellular location is the secreted. The protein localises to the target cell membrane. Its function is as follows. Antimicrobial peptide with a broad-spectrum antimicrobial activity. Keeps its antibacterial activity under a wide range of salt concentrations that mimic physiological conditions of human blood, which is surprising, since Hydra is an obligate freshwater animal with nearly no salt tolerance. Does not affect red blood cells. The protein is Arminin 1b of Hydra vulgaris (Hydra).